Reading from the N-terminus, the 183-residue chain is Dual-action ribosomal maturation protein DarP (183 aa).

It belongs to the DarP family.

The protein resides in the cytoplasm. In terms of biological role, member of a network of 50S ribosomal subunit biogenesis factors which assembles along the 30S-50S interface, preventing incorrect 23S rRNA structures from forming. Promotes peptidyl transferase center (PTC) maturation. The chain is Dual-action ribosomal maturation protein DarP from Citrobacter koseri (strain ATCC BAA-895 / CDC 4225-83 / SGSC4696).